The chain runs to 640 residues: Threonine--tRNA ligase (640 aa).

One can recognise a TGS domain in the interval 1–60 (MKITFPDGAVKEFEPGVSTADIAASISPGLKKKALAGKLNGELLDLVTPIHEDGAIEIVT). A catalytic region spans residues 241 to 538 (DHRKLGKELE…LIEEYKGAFP (298 aa)). Zn(2+) contacts are provided by Cys-334, His-385, and His-515.

The protein belongs to the class-II aminoacyl-tRNA synthetase family. As to quaternary structure, homodimer. Zn(2+) serves as cofactor.

Its subcellular location is the cytoplasm. The catalysed reaction is tRNA(Thr) + L-threonine + ATP = L-threonyl-tRNA(Thr) + AMP + diphosphate + H(+). In terms of biological role, catalyzes the attachment of threonine to tRNA(Thr) in a two-step reaction: L-threonine is first activated by ATP to form Thr-AMP and then transferred to the acceptor end of tRNA(Thr). Also edits incorrectly charged L-seryl-tRNA(Thr). This is Threonine--tRNA ligase from Listeria welshimeri serovar 6b (strain ATCC 35897 / DSM 20650 / CCUG 15529 / CIP 8149 / NCTC 11857 / SLCC 5334 / V8).